A 124-amino-acid polypeptide reads, in one-letter code: Putative iron-sulfur cluster insertion protein ErpA (124 aa).

Residues Cys-52, Cys-116, and Cys-118 each contribute to the iron-sulfur cluster site.

It belongs to the HesB/IscA family. As to quaternary structure, homodimer. The cofactor is iron-sulfur cluster.

Required for insertion of 4Fe-4S clusters. The polypeptide is Putative iron-sulfur cluster insertion protein ErpA (Ralstonia pickettii (strain 12J)).